The sequence spans 156 residues: 6,7-dimethyl-8-ribityllumazine synthase (156 aa).

Residues phenylalanine 28, 62 to 64 (ALE), and 86 to 88 (AVI) each bind 5-amino-6-(D-ribitylamino)uracil. 91 to 92 (ET) provides a ligand contact to (2S)-2-hydroxy-3-oxobutyl phosphate. Histidine 94 functions as the Proton donor in the catalytic mechanism. Asparagine 119 provides a ligand contact to 5-amino-6-(D-ribitylamino)uracil. Arginine 133 serves as a coordination point for (2S)-2-hydroxy-3-oxobutyl phosphate.

The protein belongs to the DMRL synthase family.

It carries out the reaction (2S)-2-hydroxy-3-oxobutyl phosphate + 5-amino-6-(D-ribitylamino)uracil = 6,7-dimethyl-8-(1-D-ribityl)lumazine + phosphate + 2 H2O + H(+). The protein operates within cofactor biosynthesis; riboflavin biosynthesis; riboflavin from 2-hydroxy-3-oxobutyl phosphate and 5-amino-6-(D-ribitylamino)uracil: step 1/2. Catalyzes the formation of 6,7-dimethyl-8-ribityllumazine by condensation of 5-amino-6-(D-ribitylamino)uracil with 3,4-dihydroxy-2-butanone 4-phosphate. This is the penultimate step in the biosynthesis of riboflavin. This chain is 6,7-dimethyl-8-ribityllumazine synthase, found in Azoarcus sp. (strain BH72).